The primary structure comprises 179 residues: Hypoxanthine phosphoribosyltransferase (179 aa).

Diphosphate is bound by residues Arg-45 and Gly-46. Glu-101 lines the GMP pocket. Glu-101 provides a ligand contact to IMP. Mg(2+) contacts are provided by Glu-101 and Asp-102. The Proton acceptor role is filled by Asp-105. Residues 105–110 (DTGYTL), Lys-133, and Asp-161 each bind GMP. IMP is bound by residues 105–110 (DTGYTL) and Lys-133. Arg-167 is a binding site for diphosphate.

Belongs to the purine/pyrimidine phosphoribosyltransferase family. In terms of assembly, homotetramer. The cofactor is Mg(2+).

It localises to the cytoplasm. It catalyses the reaction IMP + diphosphate = hypoxanthine + 5-phospho-alpha-D-ribose 1-diphosphate. It carries out the reaction GMP + diphosphate = guanine + 5-phospho-alpha-D-ribose 1-diphosphate. It participates in purine metabolism; IMP biosynthesis via salvage pathway; IMP from hypoxanthine: step 1/1. Functionally, purine salvage pathway enzyme which catalyzes the transfer of the ribosyl-5-phosphate group from 5-phospho-alpha-D-ribose 1-diphosphate (PRPP) to the N9 position of hypoxanthine to yield IMP (inosine 5'-monophosphate). To a lesser extent, can also act on guanine leading to GMP, but shows a highly less efficient activity with xanthine. The sequence is that of Hypoxanthine phosphoribosyltransferase (hpt) from Haemophilus influenzae (strain ATCC 51907 / DSM 11121 / KW20 / Rd).